Reading from the N-terminus, the 232-residue chain is Orotate phosphoribosyltransferase (232 aa).

5-phospho-alpha-D-ribose 1-diphosphate is bound by residues arginine 107, lysine 108, lysine 111, and 133 to 141 (EDLTTDGGS). Threonine 137 lines the orotate pocket.

Belongs to the purine/pyrimidine phosphoribosyltransferase family. PyrE subfamily. Homodimer. Mg(2+) is required as a cofactor.

It carries out the reaction orotidine 5'-phosphate + diphosphate = orotate + 5-phospho-alpha-D-ribose 1-diphosphate. Its pathway is pyrimidine metabolism; UMP biosynthesis via de novo pathway; UMP from orotate: step 1/2. Functionally, catalyzes the transfer of a ribosyl phosphate group from 5-phosphoribose 1-diphosphate to orotate, leading to the formation of orotidine monophosphate (OMP). The protein is Orotate phosphoribosyltransferase of Cereibacter sphaeroides (strain ATCC 17023 / DSM 158 / JCM 6121 / CCUG 31486 / LMG 2827 / NBRC 12203 / NCIMB 8253 / ATH 2.4.1.) (Rhodobacter sphaeroides).